Here is a 509-residue protein sequence, read N- to C-terminus: Histidine ammonia-lyase (509 aa).

The segment at residues 144–146 is a cross-link (5-imidazolinone (Ala-Gly)); the sequence is ASG. A 2,3-didehydroalanine (Ser) modification is found at Ser-145.

The protein belongs to the PAL/histidase family. In terms of processing, contains an active site 4-methylidene-imidazol-5-one (MIO), which is formed autocatalytically by cyclization and dehydration of residues Ala-Ser-Gly.

It localises to the cytoplasm. The enzyme catalyses L-histidine = trans-urocanate + NH4(+). It functions in the pathway amino-acid degradation; L-histidine degradation into L-glutamate; N-formimidoyl-L-glutamate from L-histidine: step 1/3. This Pseudoalteromonas atlantica (strain T6c / ATCC BAA-1087) protein is Histidine ammonia-lyase.